Reading from the N-terminus, the 181-residue chain is Large ribosomal subunit protein uL6 (181 aa).

It belongs to the universal ribosomal protein uL6 family. As to quaternary structure, part of the 50S ribosomal subunit.

Its function is as follows. This protein binds to the 23S rRNA, and is important in its secondary structure. It is located near the subunit interface in the base of the L7/L12 stalk, and near the tRNA binding site of the peptidyltransferase center. The protein is Large ribosomal subunit protein uL6 of Synechococcus sp. (strain CC9605).